The sequence spans 784 residues: Receptor-like protein 38 (784 aa).

An N-terminal signal peptide occupies residues 1 to 30 (MIRSQSYCFLGITITIYFFFCLLPLPNTFA). Topologically, residues 31 to 752 (SPPTQSLCRH…SELEEPVLNW (722 aa)) are extracellular. 5 LRR repeats span residues 109 to 133 (LQHL…IENL), 134 to 157 (SHLT…IGNL), 158 to 180 (NQLE…SFAN), 182 to 204 (TKLS…LSNL), and 205 to 227 (TSLA…DLSG). N132 is a glycosylation site (N-linked (GlcNAc...) asparagine). 3 N-linked (GlcNAc...) asparagine glycosylation sites follow: N180, N193, and N203. Residues 228-251 (LHNLEQIFGNENSFVGLFPASLLK) form an LRR 6; degenerate repeat. LRR repeat units follow at residues 252 to 276 (ISSL…NTSS), 278 to 301 (SRLT…LSKL), 302 to 324 (VNLE…SISK), 326 to 349 (VNLT…IWKP), 351 to 373 (NLQS…EVVN), 374 to 400 (GAKL…NFRF), 402 to 422 (FFLD…LKNS), 423 to 446 (TDFN…CMDS), 447 to 470 (TMLR…LMNC), and 472 to 496 (DMEF…SRKS). N273 carries N-linked (GlcNAc...) asparagine glycosylation. A glycan (N-linked (GlcNAc...) asparagine) is linked at N327. N421 and N432 each carry an N-linked (GlcNAc...) asparagine glycan. The stretch at 497-518 (LMVLVLRSNAFYGPVYNSTTYL) is one LRR 17; degenerate repeat. 3 N-linked (GlcNAc...) asparagine glycosylation sites follow: N513, N544, and N562. One copy of the LRR 18 repeat lies at 520 to 544 (FPRLSIIDISNNDFVGSLPQDYFAN). 4 LRR repeats span residues 608–632 (FRGF…IGLL), 633–656 (SELL…LANI), 657–680 (TNLE…LGNL), and 682–705 (FLSN…QFGT). N639, N655, N668, N679, N687, and N707 each carry an N-linked (GlcNAc...) asparagine glycan. A helical transmembrane segment spans residues 753 to 773 (IAAAIAFGPGVFCGFVIGHIF). Residues 774–784 (TSYKHLWFIAR) are Cytoplasmic-facing.

This sequence belongs to the RLP family.

Its subcellular location is the cell membrane. The polypeptide is Receptor-like protein 38 (Arabidopsis thaliana (Mouse-ear cress)).